A 109-amino-acid polypeptide reads, in one-letter code: Parvalbumin beta (109 aa).

An N-acetylserine modification is found at S1. EF-hand domains are found at residues 38–73 (KTPD…FASS) and 77–109 (LTDK…VKEA). 11 residues coordinate Ca(2+): D51, D53, S55, F57, E59, E62, D90, D92, D94, K96, and E101.

It belongs to the parvalbumin family.

In muscle, parvalbumin is thought to be involved in relaxation after contraction. It binds two calcium ions. The protein is Parvalbumin beta of Opsanus tau (Oyster toadfish).